A 409-amino-acid chain; its full sequence is LL-diaminopimelate aminotransferase (409 aa).

Substrate contacts are provided by tyrosine 15 and glycine 42. Pyridoxal 5'-phosphate-binding positions include tyrosine 72, 108–109 (SK), tyrosine 132, asparagine 187, tyrosine 218, and 246–248 (SFS). Substrate is bound by residues lysine 109, tyrosine 132, and asparagine 187. Lysine 249 is subject to N6-(pyridoxal phosphate)lysine. Pyridoxal 5'-phosphate contacts are provided by arginine 257 and asparagine 292. Residues asparagine 292 and arginine 388 each contribute to the substrate site.

Belongs to the class-I pyridoxal-phosphate-dependent aminotransferase family. LL-diaminopimelate aminotransferase subfamily. As to quaternary structure, homodimer. It depends on pyridoxal 5'-phosphate as a cofactor.

The catalysed reaction is (2S,6S)-2,6-diaminopimelate + 2-oxoglutarate = (S)-2,3,4,5-tetrahydrodipicolinate + L-glutamate + H2O + H(+). It participates in amino-acid biosynthesis; L-lysine biosynthesis via DAP pathway; LL-2,6-diaminopimelate from (S)-tetrahydrodipicolinate (aminotransferase route): step 1/1. Its function is as follows. Involved in the synthesis of meso-diaminopimelate (m-DAP or DL-DAP), required for both lysine and peptidoglycan biosynthesis. Catalyzes the direct conversion of tetrahydrodipicolinate to LL-diaminopimelate. The chain is LL-diaminopimelate aminotransferase from Heliobacterium modesticaldum (strain ATCC 51547 / Ice1).